The primary structure comprises 148 residues: DnaJ homolog subfamily C member 24 (148 aa).

The J domain maps to 10–81 (DWYSILGADP…ETKKKYDLQR (72 aa)). Residues 92 to 147 (VDAQVRLEEMSWNQGDESFFLSCRCGGKYTVSKDEAQEATLISCDACSLIVELLHQ) enclose the DPH-type MB domain. Zn(2+) is bound by residues Cys-114, Cys-116, Cys-135, and Cys-138.

This sequence belongs to the DPH4 family. Monomer and homooligomer. Iron binding promotes oligomerization. As to expression, detected in heart, brain, spleen, lung, liver, kidney and testis.

The protein resides in the cytoplasm. Its subcellular location is the cytoskeleton. It functions in the pathway protein modification; peptidyl-diphthamide biosynthesis. In terms of biological role, the iron-bound form is redox-active and can function as electron carrier. Stimulates the ATPase activity of several Hsp70-type chaperones. This ability is enhanced by iron-binding. Plays a role in the diphthamide biosynthesis, a post-translational modification of histidine which occurs in translation elongation factor 2 (EEF2). The sequence is that of DnaJ homolog subfamily C member 24 (Dnajc24) from Mus musculus (Mouse).